A 290-amino-acid polypeptide reads, in one-letter code: Diaminopimelate epimerase (290 aa).

Substrate is bound by residues N14 and N67. The active-site Proton donor is the C76. Residues 77–78, N166, N199, and 217–218 each bind substrate; these read GN and ER. The Proton acceptor role is filled by C226. Substrate is bound at residue 227-228; it reads GT.

It belongs to the diaminopimelate epimerase family. In terms of assembly, homodimer.

The protein resides in the cytoplasm. The catalysed reaction is (2S,6S)-2,6-diaminopimelate = meso-2,6-diaminopimelate. It participates in amino-acid biosynthesis; L-lysine biosynthesis via DAP pathway; DL-2,6-diaminopimelate from LL-2,6-diaminopimelate: step 1/1. Functionally, catalyzes the stereoinversion of LL-2,6-diaminopimelate (L,L-DAP) to meso-diaminopimelate (meso-DAP), a precursor of L-lysine and an essential component of the bacterial peptidoglycan. The protein is Diaminopimelate epimerase of Geobacillus kaustophilus (strain HTA426).